Here is a 200-residue protein sequence, read N- to C-terminus: Male-specific histamine-binding salivary protein (200 aa).

The N-terminal stretch at 1-18 is a signal peptide; the sequence is MKVLLLVLGAALCQNADA. Histamine-binding residues include Ser-37, Asp-41, Asp-56, and Trp-59. 2 disulfide bridges follow: Cys-65-Cys-193 and Cys-137-Cys-169. The N-linked (GlcNAc...) asparagine glycan is linked to Asn-79. Residues Glu-97, Tyr-115, Phe-125, Asp-138, Glu-154, and Trp-156 each coordinate histamine.

The protein belongs to the calycin superfamily. Histamine-binding salivary protein family. In terms of assembly, homodimer; disulcde-linked. N-glycosylated. In terms of tissue distribution, expressed in salivary glands.

It is found in the secreted. Salivary tick protein that acts by scavenging histamine at the wound site, outcompeting histamine receptors for histamine, thereby overcoming host inflammatory responses. Binds histamine with a high-affinity (Kd=1.2 nM). Contains two binding histamine sites (H and L), that appear to bind histamine with differing affinities. In Rhipicephalus appendiculatus (Brown ear tick), this protein is Male-specific histamine-binding salivary protein.